Consider the following 2690-residue polypeptide: Probable polyketide synthase 28 (2690 aa).

Residues 15–443 (YGDVAVIGIG…GSNVCLILSE (429 aa)) enclose the Ketosynthase family 3 (KS3) domain. Active-site for beta-ketoacyl synthase activity residues include C187, H326, and H366. Residues 651-684 (GVSADIIVGHSLGELSSSYSSGMIDFETLCHLIY) form an acyl/malonyl transferases region. The active-site For acyl/malonyl transferase activity is S661. Residues 906-934 (NFKSQLTNINNNNNNINNNNNNNNNNNNN) are a coiled coil. Positions 916 to 946 (NNNNNINNNNNNNNNNNNNNNNNNNNNNNNN) are disordered. The N-terminal hotdog fold stretch occupies residues 973-1102 (HEKITNEGPS…GNFSLFKHNS (130 aa)). The region spanning 973-1285 (HEKITNEGPS…CSSVSLANPS (313 aa)) is the PKS/mFAS DH domain. The active-site Proton acceptor; for dehydratase activity is H1014. Residues 1119 to 1285 (NFTTISKHDF…CSSVSLANPS (167 aa)) are C-terminal hotdog fold. Catalysis depends on D1188, which acts as the Proton donor; for dehydratase activity. Positions 1401-1429 (LNHHNNSENKNKNNNNNNNSNNNENSNNE) are disordered. The span at 1412–1429 (KNNNNNNNSNNNENSNNE) shows a compositional bias: low complexity. The region spanning 2594-2671 (SDNEFIHSTI…QSIDIIKFGY (78 aa)) is the Carrier domain. S2631 bears the O-(pantetheine 4'-phosphoryl)serine mark.

The cofactor is pantetheine 4'-phosphate.

In terms of biological role, probable polyketide synthase. This Dictyostelium discoideum (Social amoeba) protein is Probable polyketide synthase 28 (pks28).